The chain runs to 397 residues: Lysophospholipid transporter LplT (397 aa).

Residues 1–17 (MSESVHTNTSLWSKGMK) lie on the Periplasmic side of the membrane. The helical transmembrane segment at 18–38 (AVIVAQFLSAFGDNALLFATL) threads the bilayer. The Cytoplasmic portion of the chain corresponds to 39–52 (ALLKAQFYPEWSQP). A helical membrane pass occupies residues 53-73 (ILQMVFVGAYILFAPFVGQVA). At 74–90 (DSFAKGRVMMFANGLKL) the chain is on the periplasmic side. The chain crosses the membrane as a helical span at residues 91 to 111 (LGAASICFGINPFLGYTLVGV). At 112–144 (GAAAYSPAKYGILGELTTGSKLVKANGLMEAST) the chain is on the cytoplasmic side. A helical membrane pass occupies residues 145 to 165 (IAAILLGSVAGGVLADWHVLV). Residue A166 is a topological domain, periplasmic. A helical transmembrane segment spans residues 167–187 (LAACALAYGGAVVANIYIPKL). Residues 188 to 226 (AAARPGQSWNLINMTRSFLNACTSLWCNGETRFSLVGTS) are Cytoplasmic-facing. Residues 227–247 (LFWGAGVTLRFLLVLWVPVAL) form a helical membrane-spanning segment. At 248–256 (GITDNATPT) the chain is on the periplasmic side. The chain crosses the membrane as a helical span at residues 257-277 (YLNAMVAIGIVVGAGAAAKLV). The Cytoplasmic portion of the chain corresponds to 278 to 280 (TLE). Residues 281–301 (TVSRCMPAGILIGVVVLIFSL) traverse the membrane as a helical segment. The Periplasmic segment spans residues 302–304 (QHE). The chain crosses the membrane as a helical span at residues 305-325 (LLPAYALLMLIGVLGGFFVVP). Residues 326-343 (LNALLQERGKKSVGAGNA) are Cytoplasmic-facing. A helical transmembrane segment spans residues 344 to 364 (IAVQNLGENSAMLLMLGIYSL). Residues 365-366 (AV) lie on the Periplasmic side of the membrane. The helical transmembrane segment at 367–387 (MVGIPVVPIGIGFGALFALAI) threads the bilayer. The Cytoplasmic segment spans residues 388-397 (TALWIWQRRH).

Belongs to the major facilitator superfamily. LplT (TC 2.A.1.42) family.

The protein localises to the cell inner membrane. Its function is as follows. Catalyzes the facilitated diffusion of 2-acyl-glycero-3-phosphoethanolamine (2-acyl-GPE) into the cell. The sequence is that of Lysophospholipid transporter LplT from Shigella dysenteriae serotype 1 (strain Sd197).